Reading from the N-terminus, the 222-residue chain is Glutathione S-transferase alpha M14 (222 aa).

Met-1 carries the post-translational modification N-acetylmethionine. At Ala-2 the chain carries N-acetylalanine; in Glutathione S-transferase alpha M14, N-terminally processed. Residues 3-83 (GKPILHYFNG…YIATKYNLYG (81 aa)) enclose the GST N-terminal domain. N6-succinyllysine is present on Lys-4. Residues Tyr-9, 54-55 (QV), and 67-68 (QT) contribute to the glutathione site. Positions 85-208 (DAKERALIDM…QPGSQRKPPM (124 aa)) constitute a GST C-terminal domain. The disordered stretch occupies residues 199–222 (QPGSQRKPPMDAKKIRRSQEYFPD). Positions 206–222 (PPMDAKKIRRSQEYFPD) are enriched in basic and acidic residues.

It belongs to the GST superfamily. Alpha family. Homodimer or heterodimer of GSTA1 and GSTA2.

Its subcellular location is the cytoplasm. The catalysed reaction is RX + glutathione = an S-substituted glutathione + a halide anion + H(+). It catalyses the reaction prostaglandin A2 + glutathione = prostaglandin A2-S-(R)-glutathione. It carries out the reaction prostaglandin J2 + glutathione = prostaglandin J2-S-(R)-glutathione. The enzyme catalyses (13S)-hydroperoxy-(9Z,11E)-octadecadienoate + 2 glutathione = (13S)-hydroxy-(9Z,11E)-octadecadienoate + glutathione disulfide + H2O. The catalysed reaction is androst-5-ene-3,17-dione = androst-4-ene-3,17-dione. Functionally, glutathione S-transferase that catalyzes the nucleophilic attack of the sulfur atom of glutathione on the electrophilic groups of a wide range of exogenous and endogenous compounds. Involved in the formation of glutathione conjugates of both prostaglandin A2 (PGA2) and prostaglandin J2 (PGJ2). It also catalyzes the isomerization of D5-androstene-3,17-dione (AD) into D4-androstene-3,17-dione and may therefore play an important role in hormone biosynthesis. Through its glutathione-dependent peroxidase activity toward the fatty acid hydroperoxide (13S)-hydroperoxy-(9Z,11E)-octadecadienoate/13-HPODE it is also involved in the metabolism of oxidized linoleic acid. The sequence is that of Glutathione S-transferase alpha M14 from Sus scrofa (Pig).